The primary structure comprises 500 residues: Amino-acid acetyltransferase, mitochondrial (500 aa).

The transit peptide at M1–S19 directs the protein to the mitochondrion. The N-acetyltransferase domain occupies F336–P496.

Belongs to the acetyltransferase family.

It localises to the mitochondrion. The catalysed reaction is L-glutamate + acetyl-CoA = N-acetyl-L-glutamate + CoA + H(+). Its pathway is amino-acid biosynthesis; L-arginine biosynthesis; N(2)-acetyl-L-ornithine from L-glutamate: step 1/4. Its function is as follows. N-acetylglutamate synthase involved in arginine biosynthesis. The polypeptide is Amino-acid acetyltransferase, mitochondrial (arg6) (Schizosaccharomyces pombe (strain 972 / ATCC 24843) (Fission yeast)).